The primary structure comprises 119 residues: Ribonuclease P protein component (119 aa).

This sequence belongs to the RnpA family. As to quaternary structure, consists of a catalytic RNA component (M1 or rnpB) and a protein subunit.

The catalysed reaction is Endonucleolytic cleavage of RNA, removing 5'-extranucleotides from tRNA precursor.. Functionally, RNaseP catalyzes the removal of the 5'-leader sequence from pre-tRNA to produce the mature 5'-terminus. It can also cleave other RNA substrates such as 4.5S RNA. The protein component plays an auxiliary but essential role in vivo by binding to the 5'-leader sequence and broadening the substrate specificity of the ribozyme. This Citrobacter koseri (strain ATCC BAA-895 / CDC 4225-83 / SGSC4696) protein is Ribonuclease P protein component.